The sequence spans 730 residues: Catalase-peroxidase (730 aa).

Positions 92 to 225 form a cross-link, tryptophyl-tyrosyl-methioninium (Trp-Tyr) (with M-251); it reads WHSAGTYRSI…LSAVHMGLIY (134 aa). The active-site Proton acceptor is the H93. The tryptophyl-tyrosyl-methioninium (Tyr-Met) (with W-92) cross-link spans 225-251; that stretch reads YVNPEGPDGIPDPVASARDIRTTFRRM. Residue H266 participates in heme b binding.

Belongs to the peroxidase family. Peroxidase/catalase subfamily. In terms of assembly, homodimer or homotetramer. The cofactor is heme b. Formation of the three residue Trp-Tyr-Met cross-link is important for the catalase, but not the peroxidase activity of the enzyme.

It localises to the cytoplasm. It carries out the reaction H2O2 + AH2 = A + 2 H2O. It catalyses the reaction 2 H2O2 = O2 + 2 H2O. Functionally, bifunctional enzyme with both catalase and broad-spectrum peroxidase activity. The protein is Catalase-peroxidase of Blumeria hordei (Barley powdery mildew).